The following is a 429-amino-acid chain: Ribosomal RNA small subunit methyltransferase B (429 aa).

S-adenosyl-L-methionine is bound by residues 254–260 (CAAPGGK), aspartate 277, aspartate 303, and aspartate 322. Cysteine 375 serves as the catalytic Nucleophile. The segment at 397–419 (ALSETGTPDQPGQQNLPGGEEGD) is disordered. The segment covering 400–412 (ETGTPDQPGQQNL) has biased composition (polar residues).

It belongs to the class I-like SAM-binding methyltransferase superfamily. RsmB/NOP family.

The protein resides in the cytoplasm. The enzyme catalyses cytidine(967) in 16S rRNA + S-adenosyl-L-methionine = 5-methylcytidine(967) in 16S rRNA + S-adenosyl-L-homocysteine + H(+). Its function is as follows. Specifically methylates the cytosine at position 967 (m5C967) of 16S rRNA. The protein is Ribosomal RNA small subunit methyltransferase B of Salmonella heidelberg (strain SL476).